Here is a 174-residue protein sequence, read N- to C-terminus: Adenine phosphoribosyltransferase (174 aa).

Belongs to the purine/pyrimidine phosphoribosyltransferase family. Homodimer.

The protein resides in the cytoplasm. The enzyme catalyses AMP + diphosphate = 5-phospho-alpha-D-ribose 1-diphosphate + adenine. Its pathway is purine metabolism; AMP biosynthesis via salvage pathway; AMP from adenine: step 1/1. Functionally, catalyzes a salvage reaction resulting in the formation of AMP, that is energically less costly than de novo synthesis. The protein is Adenine phosphoribosyltransferase of Dichelobacter nodosus (strain VCS1703A).